The following is a 184-amino-acid chain: GMP synthase [glutamine-hydrolyzing] subunit A (184 aa).

The 182-residue stretch at 3–184 (RIVVVDNHGQ…ENFRDICAGD (182 aa)) folds into the Glutamine amidotransferase type-1 domain. Residue Cys-73 is the Nucleophile of the active site. Active-site residues include His-161 and Glu-163.

Heterodimer composed of a glutamine amidotransferase subunit (A) and a GMP-binding subunit (B).

It carries out the reaction XMP + L-glutamine + ATP + H2O = GMP + L-glutamate + AMP + diphosphate + 2 H(+). It functions in the pathway purine metabolism; GMP biosynthesis; GMP from XMP (L-Gln route): step 1/1. Functionally, catalyzes the synthesis of GMP from XMP. The protein is GMP synthase [glutamine-hydrolyzing] subunit A of Natronomonas pharaonis (strain ATCC 35678 / DSM 2160 / CIP 103997 / JCM 8858 / NBRC 14720 / NCIMB 2260 / Gabara) (Halobacterium pharaonis).